Consider the following 299-residue polypeptide: Urease accessory protein UreD (299 aa).

Belongs to the UreD family. UreD, UreF and UreG form a complex that acts as a GTP-hydrolysis-dependent molecular chaperone, activating the urease apoprotein by helping to assemble the nickel containing metallocenter of UreC. The UreE protein probably delivers the nickel.

Its subcellular location is the cytoplasm. Required for maturation of urease via the functional incorporation of the urease nickel metallocenter. The sequence is that of Urease accessory protein UreD from Prochlorococcus marinus (strain MIT 9303).